The chain runs to 333 residues: Auxiliary capsid protein (333 aa).

Positions 75 to 237 are FD; that stretch reads HKLVRYSVTL…ATVVTPTKTV (163 aa).

In terms of assembly, interacts (via FD region) with the major capsid protein.

The protein localises to the virion. Auxiliary capsid protein that forms an outer layer on the major capsid protein protrusions. The chain is Auxiliary capsid protein from Bacteroides phage crAss001 (Bacteroides phage PhiCrAss001).